A 1146-amino-acid chain; its full sequence is Killer toxin subunits alpha/beta (1146 aa).

The first 17 residues, 1–17 (MNIFYIFLFLLSFVQGL), serve as a signal peptide directing secretion. Residues 18–29 (EHTHRRGSLVKR) constitute a propeptide that is removed on maturation. 2 LysM domains span residues 205–234 (ADQS…QPIC) and 254–303 (KTYK…NLCV). The Chitin-binding type-1 domain maps to 316-372 (IAECGPLAPGEKYNAKCPLNACCSEFGFCGLTKDYCDKKSSTTGAPGTDGCFSNCGY). Disulfide bonds link cysteine 319-cysteine 338, cysteine 332-cysteine 344, cysteine 337-cysteine 351, and cysteine 366-cysteine 370. The 353-residue stretch at 383-735 (FKKIAYWLDA…DDTEDPFDEE (353 aa)) folds into the GH18 domain. Chitin-binding positions include isoleucine 424 and 447 to 450 (GGWD). The active-site Proton donor is glutamate 495. Chitin contacts are provided by residues tyrosine 496, 562–565 (MTYD), and tryptophan 707. Asparagine 771, asparagine 858, asparagine 868, asparagine 876, and asparagine 1117 each carry an N-linked (GlcNAc...) asparagine glycan.

Belongs to the glycosyl hydrolase 18 family. The killer toxin is composed of three subunits: alpha, beta and gamma. Post-translationally, RF2 is potentially split by membrane-bound basic amino acid-specific peptidase to yield the alpha and beta subunits.

The catalysed reaction is Random endo-hydrolysis of N-acetyl-beta-D-glucosaminide (1-&gt;4)-beta-linkages in chitin and chitodextrins.. Functionally, the alpha subunit is a potent exochitinase. Along with the beta subunit it plays a role in the initial interaction of the toxin with sensitive cells and allow the gamma subunit (the active toxin) to gain entry into the cell. The polypeptide is Killer toxin subunits alpha/beta (Kluyveromyces lactis (strain ATCC 8585 / CBS 2359 / DSM 70799 / NBRC 1267 / NRRL Y-1140 / WM37) (Yeast)).